Reading from the N-terminus, the 139-residue chain is Spermatogenesis-associated protein 33 (139 aa).

The interaction with ATG16L1 stretch occupies residues 1-67; that stretch reads MVTHAAGART…TAKHPPPAAS (67 aa). The interval 1–83 is disordered; sequence MVTHAAGART…VKQKSSRKKV (83 aa). Residues 25–50 show a composition bias toward basic and acidic residues; it reads KSKEKLMEKHSQEARQADRESEKPVD. Residues 68–139 are interaction with VDAC2; that stretch reads LEEKPDVKQK…ADAYNSHLKE (72 aa). A PQIIIT motif is present at residues 86–91; that stretch reads PQIIIT. Residue serine 94 is modified to Phosphoserine. The span at 97–109 shows a compositional bias: polar residues; it reads TLVSCSSSGSDQQ. The disordered stretch occupies residues 97–139; the sequence is TLVSCSSSGSDQQRTIREPEDWGPYRRHRNPSTADAYNSHLKE. Residues 110–120 are compositionally biased toward basic and acidic residues; that stretch reads RTIREPEDWGP.

Interacts (via PQIIIT motif) with PPP3R1, PPP3R2, PPP3CA, PPP3CB and PPP3CC. Interacts with VDAC2. Interacts with ATG16L1 (via WD repeats).

It localises to the cytoplasm. It is found in the cytosol. The protein localises to the nucleus. Its subcellular location is the mitochondrion. Functionally, plays an important role in sperm motility and male fertility. Required for sperm midpiece flexibility and for the localization of sperm calcineurin to the mitochondria. Promotes mitophagy as well as acts as an autophagy mediator in male germline cells. Links damaged mitochondria to autophagosomes via its binding to the outer mitochondrial membrane protein VDAC2, as well as to key autophagy machinery component ATG16L1. The sequence is that of Spermatogenesis-associated protein 33 (SPATA33) from Homo sapiens (Human).